The chain runs to 254 residues: Acetylglutamate kinase (254 aa).

Residues glycine 40–glycine 41, arginine 62, and asparagine 158 contribute to the substrate site.

It belongs to the acetylglutamate kinase family. ArgB subfamily.

The protein localises to the cytoplasm. It catalyses the reaction N-acetyl-L-glutamate + ATP = N-acetyl-L-glutamyl 5-phosphate + ADP. Its pathway is amino-acid biosynthesis; L-arginine biosynthesis; N(2)-acetyl-L-ornithine from L-glutamate: step 2/4. Functionally, catalyzes the ATP-dependent phosphorylation of N-acetyl-L-glutamate. This chain is Acetylglutamate kinase, found in Chloroflexus aurantiacus (strain ATCC 29366 / DSM 635 / J-10-fl).